We begin with the raw amino-acid sequence, 183 residues long: Threonylcarbamoyl-AMP synthase (183 aa).

The region spanning Met1–Gly183 is the YrdC-like domain.

Belongs to the SUA5 family. TsaC subfamily.

It localises to the cytoplasm. The enzyme catalyses L-threonine + hydrogencarbonate + ATP = L-threonylcarbamoyladenylate + diphosphate + H2O. Functionally, required for the formation of a threonylcarbamoyl group on adenosine at position 37 (t(6)A37) in tRNAs that read codons beginning with adenine. Catalyzes the conversion of L-threonine, HCO(3)(-)/CO(2) and ATP to give threonylcarbamoyl-AMP (TC-AMP) as the acyladenylate intermediate, with the release of diphosphate. The sequence is that of Threonylcarbamoyl-AMP synthase from Mannheimia succiniciproducens (strain KCTC 0769BP / MBEL55E).